The chain runs to 148 residues: Putative nickel-responsive regulator (148 aa).

Ni(2+)-binding residues include histidine 88, histidine 99, histidine 101, and cysteine 107.

It belongs to the transcriptional regulatory CopG/NikR family. As to quaternary structure, homotetramer. It depends on Ni(2+) as a cofactor.

Functionally, transcriptional regulator. The protein is Putative nickel-responsive regulator of Helicobacter pylori (strain ATCC 700392 / 26695) (Campylobacter pylori).